Reading from the N-terminus, the 206-residue chain is MTAKSVVVLDYGSGNLRSAQRALQRVGAEVEVTADTDAAMTADGLVVPGVGAFAACMAGLRKISGERIIAERVAAGRPVLGVCVGMQILFACGVEFGVQTPGCGHWPGAVIRLEAPVIPHMGWNVVDSAAGSALFKGLDVDARFYFVHSYAAQRWEGSPDALLTWATYRAPFLAAVEDGALAATQFHPEKSGDAGAAVLSNWVDGL.

The region spanning 5–206 is the Glutamine amidotransferase type-1 domain; sequence SVVVLDYGSG…AVLSNWVDGL (202 aa). Cysteine 83 acts as the Nucleophile in catalysis. Residues histidine 187 and glutamate 189 contribute to the active site.

As to quaternary structure, heterodimer of HisH and HisF.

It localises to the cytoplasm. The enzyme catalyses 5-[(5-phospho-1-deoxy-D-ribulos-1-ylimino)methylamino]-1-(5-phospho-beta-D-ribosyl)imidazole-4-carboxamide + L-glutamine = D-erythro-1-(imidazol-4-yl)glycerol 3-phosphate + 5-amino-1-(5-phospho-beta-D-ribosyl)imidazole-4-carboxamide + L-glutamate + H(+). It carries out the reaction L-glutamine + H2O = L-glutamate + NH4(+). The protein operates within amino-acid biosynthesis; L-histidine biosynthesis; L-histidine from 5-phospho-alpha-D-ribose 1-diphosphate: step 5/9. In terms of biological role, IGPS catalyzes the conversion of PRFAR and glutamine to IGP, AICAR and glutamate. The HisH subunit catalyzes the hydrolysis of glutamine to glutamate and ammonia as part of the synthesis of IGP and AICAR. The resulting ammonia molecule is channeled to the active site of HisF. This chain is Imidazole glycerol phosphate synthase subunit HisH (hisH), found in Mycobacterium bovis (strain ATCC BAA-935 / AF2122/97).